The chain runs to 295 residues: Fructose-bisphosphate aldolase class 1 (295 aa).

The Proton acceptor role is filled by glutamate 176. Lysine 213 functions as the Schiff-base intermediate with dihydroxyacetone-P in the catalytic mechanism.

This sequence belongs to the class I fructose-bisphosphate aldolase family.

The catalysed reaction is beta-D-fructose 1,6-bisphosphate = D-glyceraldehyde 3-phosphate + dihydroxyacetone phosphate. It participates in carbohydrate degradation; glycolysis; D-glyceraldehyde 3-phosphate and glycerone phosphate from D-glucose: step 4/4. This chain is Fructose-bisphosphate aldolase class 1, found in Clostridium acetobutylicum (strain ATCC 824 / DSM 792 / JCM 1419 / IAM 19013 / LMG 5710 / NBRC 13948 / NRRL B-527 / VKM B-1787 / 2291 / W).